The primary structure comprises 446 residues: Argininosuccinate lyase (446 aa).

This sequence belongs to the lyase 1 family. Argininosuccinate lyase subfamily.

It is found in the cytoplasm. The enzyme catalyses 2-(N(omega)-L-arginino)succinate = fumarate + L-arginine. It functions in the pathway amino-acid biosynthesis; L-arginine biosynthesis; L-arginine from L-ornithine and carbamoyl phosphate: step 3/3. This Phocaeicola vulgatus (strain ATCC 8482 / DSM 1447 / JCM 5826 / CCUG 4940 / NBRC 14291 / NCTC 11154) (Bacteroides vulgatus) protein is Argininosuccinate lyase.